Consider the following 112-residue polypeptide: Ig kappa chain V-II region 2S1.3 (112 aa).

The interval 1–23 (DIVMTQAAFSNPVTLGTSASFSC) is framework-1. Cysteine 23 and cysteine 93 form a disulfide bridge. Positions 24–39 (RSSKSLQQSKGITYLY) are complementarity-determining-1. Positions 40-54 (WYLQKPGQSPQLLIY) are framework-2. The segment at 55-61 (QMSNLAS) is complementarity-determining-2. The interval 62-93 (GVPDRFSGSGSGTDFTLRISRVEAEDVGVYYC) is framework-3. The complementarity-determining-3 stretch occupies residues 94 to 102 (ANLQELPYT). The interval 103–112 (FGGGTKLEIK) is framework-4.

In Mus musculus (Mouse), this protein is Ig kappa chain V-II region 2S1.3.